The sequence spans 160 residues: Transcription elongation factor GreA (160 aa).

Positions 12–76 (EGVKKLEEEL…QLENMLKNAS (65 aa)) form a coiled coil.

Belongs to the GreA/GreB family.

Necessary for efficient RNA polymerase transcription elongation past template-encoded arresting sites. The arresting sites in DNA have the property of trapping a certain fraction of elongating RNA polymerases that pass through, resulting in locked ternary complexes. Cleavage of the nascent transcript by cleavage factors such as GreA or GreB allows the resumption of elongation from the new 3'terminus. GreA releases sequences of 2 to 3 nucleotides. The chain is Transcription elongation factor GreA from Clostridium botulinum (strain Kyoto / Type A2).